The primary structure comprises 282 residues: tRNA uridine(34) hydroxylase (282 aa).

The Rhodanese domain occupies 128–222; it reads DGRPVVMLDT…YFEEVGGSHY (95 aa). Catalysis depends on Cys182, which acts as the Cysteine persulfide intermediate.

It belongs to the TrhO family.

The enzyme catalyses uridine(34) in tRNA + AH2 + O2 = 5-hydroxyuridine(34) in tRNA + A + H2O. Catalyzes oxygen-dependent 5-hydroxyuridine (ho5U) modification at position 34 in tRNAs. In Cupriavidus metallidurans (strain ATCC 43123 / DSM 2839 / NBRC 102507 / CH34) (Ralstonia metallidurans), this protein is tRNA uridine(34) hydroxylase.